The following is a 141-amino-acid chain: MAIERTLSIIKPDAVAKNVIGQIYARFEGAGLKIVAAKLVHLSRGEAEQFYAVHKARPFFKDLVEFMISGPVMIQALEGEGAIAKNRELMGATDPKKAEKGTIRADFADSIDANAVHGSDAPETAAVEVAFFFPGMNVYSR.

6 residues coordinate ATP: lysine 11, phenylalanine 59, arginine 87, threonine 93, arginine 104, and asparagine 114. Histidine 117 (pros-phosphohistidine intermediate) is an active-site residue.

This sequence belongs to the NDK family. In terms of assembly, homotetramer. Requires Mg(2+) as cofactor.

Its subcellular location is the cytoplasm. It carries out the reaction a 2'-deoxyribonucleoside 5'-diphosphate + ATP = a 2'-deoxyribonucleoside 5'-triphosphate + ADP. The catalysed reaction is a ribonucleoside 5'-diphosphate + ATP = a ribonucleoside 5'-triphosphate + ADP. In terms of biological role, major role in the synthesis of nucleoside triphosphates other than ATP. The ATP gamma phosphate is transferred to the NDP beta phosphate via a ping-pong mechanism, using a phosphorylated active-site intermediate. In Methylibium petroleiphilum (strain ATCC BAA-1232 / LMG 22953 / PM1), this protein is Nucleoside diphosphate kinase.